The sequence spans 1402 residues: DNA-directed RNA polymerase subunit beta' (1402 aa).

Positions 72, 74, 87, and 90 each coordinate Zn(2+). Mg(2+) is bound by residues D463, D465, and D467. Residues C811, C885, C892, and C895 each contribute to the Zn(2+) site.

It belongs to the RNA polymerase beta' chain family. The RNAP catalytic core consists of 2 alpha, 1 beta, 1 beta' and 1 omega subunit. When a sigma factor is associated with the core the holoenzyme is formed, which can initiate transcription. Requires Mg(2+) as cofactor. It depends on Zn(2+) as a cofactor.

The enzyme catalyses RNA(n) + a ribonucleoside 5'-triphosphate = RNA(n+1) + diphosphate. Its function is as follows. DNA-dependent RNA polymerase catalyzes the transcription of DNA into RNA using the four ribonucleoside triphosphates as substrates. This Paracoccus denitrificans (strain Pd 1222) protein is DNA-directed RNA polymerase subunit beta'.